The following is a 63-amino-acid chain: Large ribosomal subunit protein bL28 (63 aa).

It belongs to the bacterial ribosomal protein bL28 family.

This chain is Large ribosomal subunit protein bL28, found in Symbiobacterium thermophilum (strain DSM 24528 / JCM 14929 / IAM 14863 / T).